A 60-amino-acid chain; its full sequence is Large ribosomal subunit protein uL30 (60 aa).

It belongs to the universal ribosomal protein uL30 family. Part of the 50S ribosomal subunit.

The chain is Large ribosomal subunit protein uL30 from Ligilactobacillus salivarius (strain UCC118) (Lactobacillus salivarius).